We begin with the raw amino-acid sequence, 745 residues long: Phosphoribosylformylglycinamidine synthase subunit PurL (745 aa).

Residue H41 is part of the active site. 2 residues coordinate ATP: Y44 and K83. E85 is a binding site for Mg(2+). Substrate is bound by residues 86-89 (SHNH) and R108. H87 (proton acceptor) is an active-site residue. D109 contacts Mg(2+). Residue Q232 participates in substrate binding. D260 is a Mg(2+) binding site. 304–306 (ESQ) serves as a coordination point for substrate. ATP is bound by residues D494 and G531. Residue N532 participates in Mg(2+) binding. Substrate is bound at residue S534.

Belongs to the FGAMS family. As to quaternary structure, monomer. Part of the FGAM synthase complex composed of 1 PurL, 1 PurQ and 2 PurS subunits.

Its subcellular location is the cytoplasm. It catalyses the reaction N(2)-formyl-N(1)-(5-phospho-beta-D-ribosyl)glycinamide + L-glutamine + ATP + H2O = 2-formamido-N(1)-(5-O-phospho-beta-D-ribosyl)acetamidine + L-glutamate + ADP + phosphate + H(+). The protein operates within purine metabolism; IMP biosynthesis via de novo pathway; 5-amino-1-(5-phospho-D-ribosyl)imidazole from N(2)-formyl-N(1)-(5-phospho-D-ribosyl)glycinamide: step 1/2. Part of the phosphoribosylformylglycinamidine synthase complex involved in the purines biosynthetic pathway. Catalyzes the ATP-dependent conversion of formylglycinamide ribonucleotide (FGAR) and glutamine to yield formylglycinamidine ribonucleotide (FGAM) and glutamate. The FGAM synthase complex is composed of three subunits. PurQ produces an ammonia molecule by converting glutamine to glutamate. PurL transfers the ammonia molecule to FGAR to form FGAM in an ATP-dependent manner. PurS interacts with PurQ and PurL and is thought to assist in the transfer of the ammonia molecule from PurQ to PurL. This Aquifex aeolicus (strain VF5) protein is Phosphoribosylformylglycinamidine synthase subunit PurL.